The following is a 292-amino-acid chain: Elongation factor Ts (292 aa).

The segment at 79–82 (TDFV) is involved in Mg(2+) ion dislocation from EF-Tu.

This sequence belongs to the EF-Ts family.

It is found in the cytoplasm. Functionally, associates with the EF-Tu.GDP complex and induces the exchange of GDP to GTP. It remains bound to the aminoacyl-tRNA.EF-Tu.GTP complex up to the GTP hydrolysis stage on the ribosome. The sequence is that of Elongation factor Ts from Xylella fastidiosa (strain Temecula1 / ATCC 700964).